The sequence spans 151 residues: MDEKDLATQPQETGQDPRLPGQDAHPRGAQGAEAQAAEGPLAAHAQGAPLKSLKGDSAFRRLRQGRTGRGRYVTVRWLPAPELRVGIVVSKKVGKTVVRNRVKRRLREILRRLHLPRAHLLLVATPEAREAGFAELFQDLTRALKKSGLVQ.

Residues 1–62 (MDEKDLATQP…LKGDSAFRRL (62 aa)) are disordered. Low complexity predominate over residues 28 to 48 (GAQGAEAQAAEGPLAAHAQGA).

The protein belongs to the RnpA family. As to quaternary structure, consists of a catalytic RNA component (M1 or rnpB) and a protein subunit.

The catalysed reaction is Endonucleolytic cleavage of RNA, removing 5'-extranucleotides from tRNA precursor.. In terms of biological role, RNaseP catalyzes the removal of the 5'-leader sequence from pre-tRNA to produce the mature 5'-terminus. It can also cleave other RNA substrates such as 4.5S RNA. The protein component plays an auxiliary but essential role in vivo by binding to the 5'-leader sequence and broadening the substrate specificity of the ribozyme. In Thermus oshimai, this protein is Ribonuclease P protein component.